The following is a 208-amino-acid chain: Protein-L-isoaspartate O-methyltransferase (208 aa).

Serine 59 is a catalytic residue.

It belongs to the methyltransferase superfamily. L-isoaspartyl/D-aspartyl protein methyltransferase family.

The protein localises to the cytoplasm. It carries out the reaction [protein]-L-isoaspartate + S-adenosyl-L-methionine = [protein]-L-isoaspartate alpha-methyl ester + S-adenosyl-L-homocysteine. Catalyzes the methyl esterification of L-isoaspartyl residues in peptides and proteins that result from spontaneous decomposition of normal L-aspartyl and L-asparaginyl residues. It plays a role in the repair and/or degradation of damaged proteins. In Aliivibrio salmonicida (strain LFI1238) (Vibrio salmonicida (strain LFI1238)), this protein is Protein-L-isoaspartate O-methyltransferase.